We begin with the raw amino-acid sequence, 184 residues long: Bifunctional protein PyrR (184 aa).

The short motif at 98-110 (VVLVDDVLYTGRT) is the PRPP-binding element.

It belongs to the purine/pyrimidine phosphoribosyltransferase family. PyrR subfamily.

It catalyses the reaction UMP + diphosphate = 5-phospho-alpha-D-ribose 1-diphosphate + uracil. Its function is as follows. Regulates the transcription of the pyrimidine nucleotide (pyr) operon in response to exogenous pyrimidines. Also displays a weak uracil phosphoribosyltransferase activity which is not physiologically significant. The protein is Bifunctional protein PyrR of Roseiflexus castenholzii (strain DSM 13941 / HLO8).